The primary structure comprises 131 residues: Protein Bouncer (131 aa).

A signal peptide spans 1–26 (MGSLRTRQLFHAALLWLCLPLPLLLC). 4 disulfide bridges follow: Cys31–Cys56, Cys50–Cys74, Cys80–Cys99, and Cys100–Cys105. The 76-residue stretch at 31-106 (CYYSPVLEKE…YSCCDWPYCN (76 aa)) folds into the UPAR/Ly6 domain. Residue Asn65 is glycosylated (N-linked (GlcNAc...) asparagine). The GPI-anchor amidated asparagine moiety is linked to residue Asn106. The propeptide at 107–131 (RAVALEPLTAMLVAAAVVACSFCLT) is removed in mature form.

The protein belongs to the SPACA4/bouncer family. Interacts with spermatocyte complex composed of izumo1, spaca6 and tmem81. Expressed in oocytes. Not expressed in testis.

The protein localises to the cell membrane. In terms of biological role, oocyte-expressed fertilization factor that mediates sperm-egg binding and is essential for sperm entry into the egg. Necessary and sufficient to mediate species-specific gamete recognition and fertilization, which is essential for vertebrate species performing external fertilization. External fertilization cannot guarantee that only conspecific sperm reaches the egg by precopulatory mate choice: proteins such as Bouncer can therefore support the selection of conspecific sperm. The protein is Protein Bouncer of Oryzias latipes (Japanese rice fish).